Consider the following 296-residue polypeptide: 5,10-methylenetetrahydrofolate reductase (296 aa).

Glu28 serves as the catalytic Proton donor/acceptor. NADH is bound at residue Thr59. Tyr60, Ala62, His88, Arg118, Gly119, Asp120, Ala132, Tyr152, His156, Ala159, Asp165, Asn168, Arg171, and Lys172 together coordinate FAD. Asp120 contacts (6S)-5-methyl-5,6,7,8-tetrahydrofolate. Gln183 contributes to the NADH binding site. (6S)-5-methyl-5,6,7,8-tetrahydrofolate-binding residues include Gln183, Gln219, and Arg279.

This sequence belongs to the methylenetetrahydrofolate reductase family. Homotetramer. The cofactor is FAD.

The catalysed reaction is (6S)-5-methyl-5,6,7,8-tetrahydrofolate + NAD(+) = (6R)-5,10-methylene-5,6,7,8-tetrahydrofolate + NADH + H(+). It participates in one-carbon metabolism; tetrahydrofolate interconversion. The protein operates within amino-acid biosynthesis; L-methionine biosynthesis via de novo pathway. Functionally, catalyzes the NADH-dependent reduction of 5,10-methylenetetrahydrofolate to 5-methyltetrahydrofolate. Is required to provide the methyl group necessary for methionine synthetase to convert homocysteine to methionine; the methyl group is given by 5-methyltetrahydrofolate. Can also use NADPH as the reductant, but much less effectively than NADH. In Escherichia coli (strain K12), this protein is 5,10-methylenetetrahydrofolate reductase.